We begin with the raw amino-acid sequence, 404 residues long: 26S proteasome regulatory subunit 6A-B (404 aa).

Residue 192 to 199 (GPPGTGKT) participates in ATP binding.

This sequence belongs to the AAA ATPase family. As to quaternary structure, may form a heterodimer with a related family member.

The protein localises to the cytoplasm. The protein resides in the nucleus. In terms of biological role, the 26S proteasome is involved in the ATP-dependent degradation of ubiquitinated proteins. The regulatory (or ATPase) complex confers ATP dependency and substrate specificity to the 26S complex. The protein is 26S proteasome regulatory subunit 6A-B (psmc3-b) of Xenopus laevis (African clawed frog).